The primary structure comprises 333 residues: MKNLRNRSFLTLLDFSRQEVEFLLTLSEDLKRAKYIGTEKPMLKNKNIALLFEKDSTRTRCAFEVAAHDQGANVTYLGPTGSQMGKKETTKDTARVLGGMYDGIEYRGFSQRTVETLAEYSGVPVWNGLTDEDHPTQVLADFLTAKEVLKKDYADINFTYVGDGRNNVANALMQGAAIMGMNFHLVCPKELNPTDELLNRCKNIAAENGGNILITDDIDQGVKGSDVIYTDVWVSMGEPDEVWKERLELLKPYQVNKEMMDKTGNPNVIFEHCLPSFHNADTKIGQQIFEKYGIREMEVTDEVFESKASVVFQEAENRMHTIKAVMVATLGEF.

Carbamoyl phosphate-binding positions include 56–59 (STRT), glutamine 83, arginine 107, and 134–137 (HPTQ). L-ornithine is bound by residues asparagine 167, aspartate 231, and 235–236 (SM). Residues 273-274 (CL) and arginine 318 each bind carbamoyl phosphate.

It belongs to the aspartate/ornithine carbamoyltransferase superfamily. OTCase family.

Its subcellular location is the cytoplasm. The catalysed reaction is carbamoyl phosphate + L-ornithine = L-citrulline + phosphate + H(+). It participates in amino-acid biosynthesis; L-arginine biosynthesis; L-arginine from L-ornithine and carbamoyl phosphate: step 1/3. Its function is as follows. Reversibly catalyzes the transfer of the carbamoyl group from carbamoyl phosphate (CP) to the N(epsilon) atom of ornithine (ORN) to produce L-citrulline. This Staphylococcus aureus (strain Mu50 / ATCC 700699) protein is Ornithine carbamoyltransferase (argF).